The following is a 395-amino-acid chain: Imidazolonepropionase (395 aa).

Residues H63 and H65 each contribute to the Fe(3+) site. Positions 63 and 65 each coordinate Zn(2+). 4-imidazolone-5-propanoate is bound by residues R72, Y135, and H168. Residue Y135 participates in N-formimidoyl-L-glutamate binding. H233 is a Fe(3+) binding site. H233 contributes to the Zn(2+) binding site. Residue Q236 coordinates 4-imidazolone-5-propanoate. D308 contributes to the Fe(3+) binding site. Zn(2+) is bound at residue D308. N-formimidoyl-L-glutamate contacts are provided by N310 and G312. T313 contacts 4-imidazolone-5-propanoate.

It belongs to the metallo-dependent hydrolases superfamily. HutI family. Zn(2+) is required as a cofactor. Fe(3+) serves as cofactor.

It localises to the cytoplasm. It carries out the reaction 4-imidazolone-5-propanoate + H2O = N-formimidoyl-L-glutamate. Its pathway is amino-acid degradation; L-histidine degradation into L-glutamate; N-formimidoyl-L-glutamate from L-histidine: step 3/3. Functionally, catalyzes the hydrolytic cleavage of the carbon-nitrogen bond in imidazolone-5-propanoate to yield N-formimidoyl-L-glutamate. It is the third step in the universal histidine degradation pathway. This Cereibacter sphaeroides (strain ATCC 17023 / DSM 158 / JCM 6121 / CCUG 31486 / LMG 2827 / NBRC 12203 / NCIMB 8253 / ATH 2.4.1.) (Rhodobacter sphaeroides) protein is Imidazolonepropionase.